Here is a 376-residue protein sequence, read N- to C-terminus: Succinyl-diaminopimelate desuccinylase (376 aa).

His-66 lines the Zn(2+) pocket. Residue Asp-68 is part of the active site. Zn(2+) is bound at residue Asp-99. The active-site Proton acceptor is Glu-133. 3 residues coordinate Zn(2+): Glu-134, Glu-162, and His-348.

It belongs to the peptidase M20A family. DapE subfamily. As to quaternary structure, homodimer. Zn(2+) is required as a cofactor. Co(2+) serves as cofactor.

The catalysed reaction is N-succinyl-(2S,6S)-2,6-diaminopimelate + H2O = (2S,6S)-2,6-diaminopimelate + succinate. The protein operates within amino-acid biosynthesis; L-lysine biosynthesis via DAP pathway; LL-2,6-diaminopimelate from (S)-tetrahydrodipicolinate (succinylase route): step 3/3. Catalyzes the hydrolysis of N-succinyl-L,L-diaminopimelic acid (SDAP), forming succinate and LL-2,6-diaminopimelate (DAP), an intermediate involved in the bacterial biosynthesis of lysine and meso-diaminopimelic acid, an essential component of bacterial cell walls. The sequence is that of Succinyl-diaminopimelate desuccinylase from Xanthomonas oryzae pv. oryzae (strain MAFF 311018).